The primary structure comprises 220 residues: Endonuclease NucS (220 aa).

Belongs to the NucS endonuclease family.

The protein localises to the cytoplasm. In terms of biological role, cleaves both 3' and 5' ssDNA extremities of branched DNA structures. The chain is Endonuclease NucS from Parafrankia sp. (strain EAN1pec).